Here is a 632-residue protein sequence, read N- to C-terminus: Probable extracellular metalloproteinase 2 (632 aa).

A signal peptide spans 1 to 19 (MHGLLLAGLAAALPLGVAG). Residues 20 to 244 (LPARQQSGLS…VHNVVDYVAS (225 aa)) constitute a propeptide that is removed on maturation. 2 N-linked (GlcNAc...) asparagine glycosylation sites follow: asparagine 81 and asparagine 270. Histidine 429 contributes to the Zn(2+) binding site. Residue glutamate 430 is part of the active site. Histidine 433 serves as a coordination point for Zn(2+).

It belongs to the peptidase M36 family. The cofactor is Zn(2+).

It is found in the secreted. Functionally, secreted metalloproteinase probably acting as a virulence factor. This Arthroderma benhamiae (strain ATCC MYA-4681 / CBS 112371) (Trichophyton mentagrophytes) protein is Probable extracellular metalloproteinase 2 (MEP2).